The sequence spans 132 residues: uncharacterized protein (132 aa).

It to M.jannaschii MJ0661.

This is an uncharacterized protein from Helicobacter pylori (strain J99 / ATCC 700824) (Campylobacter pylori J99).